A 111-amino-acid polypeptide reads, in one-letter code: UPF0122 protein YofM (111 aa).

Belongs to the UPF0122 family.

Its function is as follows. Might take part in the signal recognition particle (SRP) pathway. This is inferred from the conservation of its genetic proximity to ftsY/ffh. May be a regulatory protein. In Lactococcus lactis subsp. lactis (strain IL1403) (Streptococcus lactis), this protein is UPF0122 protein YofM (yofM).